The following is a 206-amino-acid chain: Large ribosomal subunit protein uL4 (206 aa).

Residues 47-75 (GTQSAKTRAEVSGGGIKPWRQKGTGRARQ) are disordered.

The protein belongs to the universal ribosomal protein uL4 family. In terms of assembly, part of the 50S ribosomal subunit.

Its function is as follows. One of the primary rRNA binding proteins, this protein initially binds near the 5'-end of the 23S rRNA. It is important during the early stages of 50S assembly. It makes multiple contacts with different domains of the 23S rRNA in the assembled 50S subunit and ribosome. Functionally, forms part of the polypeptide exit tunnel. The chain is Large ribosomal subunit protein uL4 from Clostridium botulinum (strain ATCC 19397 / Type A).